We begin with the raw amino-acid sequence, 747 residues long: Asparagine synthetase [glutamine-hydrolyzing] 2 (747 aa).

Residue Cys-2 is the For GATase activity of the active site. The region spanning 2-218 is the Glutamine amidotransferase type-2 domain; the sequence is CGLAGIINLA…AGHYLEINLT (217 aa). L-glutamine-binding positions include 52–56, 77–79, and Asp-100; these read RLSIL and NGE. An ATP-binding site is contributed by 395 to 396; it reads SP.

It belongs to the asparagine synthetase family.

It carries out the reaction L-aspartate + L-glutamine + ATP + H2O = L-asparagine + L-glutamate + AMP + diphosphate + H(+). The protein operates within amino-acid biosynthesis; L-asparagine biosynthesis; L-asparagine from L-aspartate (L-Gln route): step 1/1. The protein is Asparagine synthetase [glutamine-hydrolyzing] 2 (asnH) of Bacillus subtilis (strain 168).